The following is a 399-amino-acid chain: Fructose-bisphosphate aldolase 1, chloroplastic (399 aa).

A chloroplast-targeting transit peptide spans 1–48 (MASSTATMLKASPVKSDWVKGQSLLLRQPSSVSAIRSHVAPSALTVRA). Arg-96 contributes to the substrate binding site. At Ser-158 the chain carries Phosphoserine. Substrate is bound at residue Lys-186. Ser-216 carries the post-translational modification Phosphoserine. Glu-226 (proton acceptor) is an active-site residue. Lys-268 acts as the Schiff-base intermediate with dihydroxyacetone-P in catalysis. 310-312 (SGG) contributes to the substrate binding site. Lys-395 carries the post-translational modification N6,N6,N6-trimethyllysine.

Belongs to the class I fructose-bisphosphate aldolase family. In terms of assembly, homotetramer. Post-translationally, can be trimethylated at Lys-395 by LSMT-L, but the trimethylation has no effect in vitro on the kinetic properties of the enzyme. In terms of processing, S-glutathionylated. Highly expressed in rosettes leaves and cauline leaves.

The protein localises to the plastid. It is found in the chloroplast. The protein resides in the plastoglobule. Its subcellular location is the chloroplast stroma. The enzyme catalyses beta-D-fructose 1,6-bisphosphate = D-glyceraldehyde 3-phosphate + dihydroxyacetone phosphate. The protein operates within carbohydrate degradation; glycolysis; D-glyceraldehyde 3-phosphate and glycerone phosphate from D-glucose: step 4/4. Functionally, plays a key role in glycolysis and gluconeogenesis. This is Fructose-bisphosphate aldolase 1, chloroplastic from Arabidopsis thaliana (Mouse-ear cress).